The sequence spans 502 residues: Aspartyl/glutamyl-tRNA(Asn/Gln) amidotransferase subunit B (502 aa).

The protein belongs to the GatB/GatE family. GatB subfamily. Heterotrimer of A, B and C subunits.

It catalyses the reaction L-glutamyl-tRNA(Gln) + L-glutamine + ATP + H2O = L-glutaminyl-tRNA(Gln) + L-glutamate + ADP + phosphate + H(+). It carries out the reaction L-aspartyl-tRNA(Asn) + L-glutamine + ATP + H2O = L-asparaginyl-tRNA(Asn) + L-glutamate + ADP + phosphate + 2 H(+). Functionally, allows the formation of correctly charged Asn-tRNA(Asn) or Gln-tRNA(Gln) through the transamidation of misacylated Asp-tRNA(Asn) or Glu-tRNA(Gln) in organisms which lack either or both of asparaginyl-tRNA or glutaminyl-tRNA synthetases. The reaction takes place in the presence of glutamine and ATP through an activated phospho-Asp-tRNA(Asn) or phospho-Glu-tRNA(Gln). The protein is Aspartyl/glutamyl-tRNA(Asn/Gln) amidotransferase subunit B of Brucella suis (strain ATCC 23445 / NCTC 10510).